Consider the following 637-residue polypeptide: Phosphomethylpyrimidine synthase (637 aa).

Substrate-binding positions include N242, M271, Y300, H336, 356–358 (SRG), 397–400 (DGLR), and E436. H440 serves as a coordination point for Zn(2+). Y463 is a substrate binding site. H504 contacts Zn(2+). 3 residues coordinate [4Fe-4S] cluster: C584, C587, and C592.

The protein belongs to the ThiC family. Homodimer. The cofactor is [4Fe-4S] cluster.

It catalyses the reaction 5-amino-1-(5-phospho-beta-D-ribosyl)imidazole + S-adenosyl-L-methionine = 4-amino-2-methyl-5-(phosphooxymethyl)pyrimidine + CO + 5'-deoxyadenosine + formate + L-methionine + 3 H(+). Its pathway is cofactor biosynthesis; thiamine diphosphate biosynthesis. Functionally, catalyzes the synthesis of the hydroxymethylpyrimidine phosphate (HMP-P) moiety of thiamine from aminoimidazole ribotide (AIR) in a radical S-adenosyl-L-methionine (SAM)-dependent reaction. This is Phosphomethylpyrimidine synthase from Herminiimonas arsenicoxydans.